The chain runs to 143 residues: Putative pre-16S rRNA nuclease (143 aa).

This sequence belongs to the YqgF nuclease family.

It localises to the cytoplasm. Could be a nuclease involved in processing of the 5'-end of pre-16S rRNA. This is Putative pre-16S rRNA nuclease from Marinobacter nauticus (strain ATCC 700491 / DSM 11845 / VT8) (Marinobacter aquaeolei).